The following is a 733-amino-acid chain: MRNILLCENMTKVQKEVRCDHCGTSQGSKSVFSGQKVFLGRKITDVLETITHRSIPSSLPIKICFVCTSTFMSSAALIEKVRETVDRVQEQPAKKTKVAEIEEPSTQESDKKAVKVPKKNTTLRQRSKSIAAFPPSFVNGANTNTEIEIISASPKKLDKTPKKQISRLFEDNLNDSVKLTPAKEVSSTKKAFLNLFGNGGNDAIEVLTESEEEEDSDKGPITINTNNFQCPECEFHAKFPKPYKEHLQKEHGLQRPRIYPCTLCIKTFGVLKTLKNHLRDTHSRTFESEAKTKAKESKEKEAKSGAKNKIDAKAKETNAVSQRKKPKEKKSKEKKTEIKCNVETKVVDEIDDQVNNKKGTDSEDADQTQATKIASFKALNESLMKKRMLENVIDSEYTFAINGSSASTPRADSNNFQCEICDCELMTAKQMQEHMKTVHSIDKPKVFKCHVCEKSLATKQSLKTHMTLHADGAEAPNSSKRKILQDEDEDVDILGTTQIENTAEKVEGPKKSQQSPTKAAKFTNRKILQEEDEVVEIVDAFKTDNTAEDDEGPAEEKIIRSRNNIQHQVDGGMIAPRSPAKKTKKTSHVDLSVSTTNGNSPAKSEKRKKQDKSEDTLPSSDVDIVEEINYNVRPHKKARLESIGDSTADESTLSCDRCGKFVKSRQRLDSHMEKKHAAKLQCTLCKEVYQNQMDYVAHFSNCGSEGGLPCGVANCKKVFTEANFLSSHLRKRH.

The 75-residue stretch at 17–91 (VRCDHCGTSQ…RETVDRVQEQ (75 aa)) folds into the ZAD domain. Residues Cys19, Cys22, Cys64, and Cys67 each coordinate Zn(2+). Residues 90-100 (EQPAKKTKVAE) show a composition bias toward basic and acidic residues. Residues 90–121 (EQPAKKTKVAEIEEPSTQESDKKAVKVPKKNT) form a disordered region. Residues Ser109, Ser153, and Ser176 each carry the phosphoserine modification. A phosphothreonine mark is found at Thr180 and Thr188. C2H2-type zinc fingers lie at residues 228–251 (FQCP…QKEH) and 259–282 (YPCT…RDTH). Positions 285–316 (TFESEAKTKAKESKEKEAKSGAKNKIDAKAKE) are enriched in basic and acidic residues. Residues 285–336 (TFESEAKTKAKESKEKEAKSGAKNKIDAKAKETNAVSQRKKPKEKKSKEKKT) are disordered. 2 C2H2-type zinc fingers span residues 416 to 439 (FQCE…KTVH) and 447 to 469 (FKCH…MTLH). Disordered regions lie at residues 499 to 525 (IENT…FTNR) and 540 to 622 (AFKT…SSDV). Positions 592 to 602 (SVSTTNGNSPA) are enriched in polar residues. 3 positions are modified to phosphoserine: Ser600, Ser642, and Ser646. Phosphothreonine is present on Thr647. 2 consecutive C2H2-type zinc fingers follow at residues 653–676 (LSCD…EKKH) and 708–733 (LPCG…RKRH). Ser654 bears the Phosphoserine mark.

The protein belongs to the krueppel C2H2-type zinc-finger protein family.

The protein localises to the nucleus. Its subcellular location is the nucleolus. Functionally, required for rDNA copy number maintenance and non-random sister chromatid segregation (NRSS) following unequal sister chromatid exchange. Binds ribosomal DNA (rDNA) preferentially binding to intergenic spacers (IGS) regions on both X and Y chromosomes. Essential for NRSS, a mechanism which contributes to the recovery and maintenance of inherently unstable rDNA copy numbers so that the integrity of the germline genome is upheld over generations and germline immortality is sustained. May be involved in transcriptional regulation. The sequence is that of Zinc finger protein indra from Drosophila melanogaster (Fruit fly).